Reading from the N-terminus, the 304-residue chain is MSILKNLAKNLGLTNITQPKKKYATVGEKKSDEEKERAKYKVKNIDNLKEDEVTKCPSCGVLSHKSEIRANMKMCSNCNHYFNMSARERIELLIDEGTFKEEDVTLTSANPINFPEYVEKIEKAQHDSGMNEGVISGLGEINGLKVSIACMDFNFMGGSMGSVVGEKITAALERAIEHKIPAVVVAISGGARMQEGLTSLMQMAKTSAAVKKMRLAGLPFISVPVNPTTGGVTASFAMLGDIIISEPKARIGFAGPRVIEQTIRQKLPENFQKSEFLQECGMVDVIAKREDLKATIFKVLNDII.

One can recognise a CoA carboxyltransferase N-terminal domain in the interval 52–304 (EVTKCPSCGV…TIFKVLNDII (253 aa)). The Zn(2+) site is built by Cys56, Cys59, Cys75, and Cys78. The segment at 56–78 (CPSCGVLSHKSEIRANMKMCSNC) adopts a C4-type zinc-finger fold.

It belongs to the AccD/PCCB family. Acetyl-CoA carboxylase is a heterohexamer composed of biotin carboxyl carrier protein (AccB), biotin carboxylase (AccC) and two subunits each of ACCase subunit alpha (AccA) and ACCase subunit beta (AccD). The cofactor is Zn(2+).

The protein localises to the cytoplasm. It catalyses the reaction N(6)-carboxybiotinyl-L-lysyl-[protein] + acetyl-CoA = N(6)-biotinyl-L-lysyl-[protein] + malonyl-CoA. It functions in the pathway lipid metabolism; malonyl-CoA biosynthesis; malonyl-CoA from acetyl-CoA: step 1/1. In terms of biological role, component of the acetyl coenzyme A carboxylase (ACC) complex. Biotin carboxylase (BC) catalyzes the carboxylation of biotin on its carrier protein (BCCP) and then the CO(2) group is transferred by the transcarboxylase to acetyl-CoA to form malonyl-CoA. The polypeptide is Acetyl-coenzyme A carboxylase carboxyl transferase subunit beta (Fusobacterium nucleatum subsp. nucleatum (strain ATCC 25586 / DSM 15643 / BCRC 10681 / CIP 101130 / JCM 8532 / KCTC 2640 / LMG 13131 / VPI 4355)).